Reading from the N-terminus, the 435-residue chain is ATP-dependent protease ATPase subunit HslU (435 aa).

ATP contacts are provided by residues Val18, 60 to 65 (GVGKTE), Asp248, Glu313, and Arg385.

The protein belongs to the ClpX chaperone family. HslU subfamily. As to quaternary structure, a double ring-shaped homohexamer of HslV is capped on each side by a ring-shaped HslU homohexamer. The assembly of the HslU/HslV complex is dependent on binding of ATP.

The protein localises to the cytoplasm. Functionally, ATPase subunit of a proteasome-like degradation complex; this subunit has chaperone activity. The binding of ATP and its subsequent hydrolysis by HslU are essential for unfolding of protein substrates subsequently hydrolyzed by HslV. HslU recognizes the N-terminal part of its protein substrates and unfolds these before they are guided to HslV for hydrolysis. This chain is ATP-dependent protease ATPase subunit HslU, found in Rhodospirillum rubrum (strain ATCC 11170 / ATH 1.1.1 / DSM 467 / LMG 4362 / NCIMB 8255 / S1).